A 166-amino-acid chain; its full sequence is Protein-export protein SecB (166 aa).

Residues 1–16 (MTDTSAAGNPTPGQQP) are compositionally biased toward polar residues. Positions 1-21 (MTDTSAAGNPTPGQQPANPPS) are disordered.

The protein belongs to the SecB family. As to quaternary structure, homotetramer, a dimer of dimers. One homotetramer interacts with 1 SecA dimer.

It is found in the cytoplasm. One of the proteins required for the normal export of preproteins out of the cell cytoplasm. It is a molecular chaperone that binds to a subset of precursor proteins, maintaining them in a translocation-competent state. It also specifically binds to its receptor SecA. The chain is Protein-export protein SecB from Hyphomonas neptunium (strain ATCC 15444).